Here is a 430-residue protein sequence, read N- to C-terminus: MTAVSALRPAGPEAVAAYVDGLARRAREVGRILSRAETAAKNRALLAIAAALEESADALIEENRKDLEAGAAKGLDRAQLERLGVDAKRVQTMAVGLREIAALPDPVGEISGLTYRPSGIQVGRMRVPLGVIGIIYESRPNVTADAAGLCLKSGNACILRGGSEAIHSNRAIAACIRRGLEAGGLPADAVQLIETTDRAAVGALLAADEYVDIIVPRGGRSLIERVVAESRIPVIKHLDGICHVYIDDGADLAKARRIAINAKTQRYGVCNAMETLLVAAGIAPAVLPDLAALYRDKGVELRGCPETCRLVPDCVPATEADWDTEYLAPILAVRVVAGLDEAIEHIHRHGSGHTDAIVTEDYGRARRFLREVDSASVMVNASTRFADGFEYGLGAEIGISTDKLHARGPVGLEGLTTQKFIVLGDGHVRI.

The protein belongs to the gamma-glutamyl phosphate reductase family.

The protein localises to the cytoplasm. The enzyme catalyses L-glutamate 5-semialdehyde + phosphate + NADP(+) = L-glutamyl 5-phosphate + NADPH + H(+). It functions in the pathway amino-acid biosynthesis; L-proline biosynthesis; L-glutamate 5-semialdehyde from L-glutamate: step 2/2. Functionally, catalyzes the NADPH-dependent reduction of L-glutamate 5-phosphate into L-glutamate 5-semialdehyde and phosphate. The product spontaneously undergoes cyclization to form 1-pyrroline-5-carboxylate. In Methylococcus capsulatus (strain ATCC 33009 / NCIMB 11132 / Bath), this protein is Gamma-glutamyl phosphate reductase.